A 406-amino-acid chain; its full sequence is uncharacterized protein (406 aa).

It to S.pombe SpAC12C2.04.

It localises to the cytoplasm. It is found in the nucleus. This is an uncharacterized protein from Schizosaccharomyces pombe (strain 972 / ATCC 24843) (Fission yeast).